A 285-amino-acid chain; its full sequence is Eukaryotic translation initiation factor 3 subunit F-2 (285 aa).

The MPN domain maps to 11–145; that stretch reads VYLKPLVFFQ…TRLYCAVEMG (135 aa).

It belongs to the eIF-3 subunit F family. In terms of assembly, component of the eukaryotic translation initiation factor 3 (eIF-3) complex. The eIF-3 complex interacts with pix.

The protein resides in the cytoplasm. In terms of biological role, component of the eukaryotic translation initiation factor 3 (eIF-3) complex, which is involved in protein synthesis of a specialized repertoire of mRNAs and, together with other initiation factors, stimulates binding of mRNA and methionyl-tRNAi to the 40S ribosome. The eIF-3 complex specifically targets and initiates translation of a subset of mRNAs involved in cell proliferation. The chain is Eukaryotic translation initiation factor 3 subunit F-2 from Drosophila melanogaster (Fruit fly).